A 67-amino-acid polypeptide reads, in one-letter code: Phycobilisome 7.8 kDa linker polypeptide, allophycocyanin-associated, core (67 aa).

The 56-residue stretch at 1–56 folds into the CpcD-like domain; that stretch reads MRMFKITACVPSQTRIRTQRELQNTYFTKLVPYENWFREQQRIQKMGGKIVKVELF.

The protein belongs to the phycobilisome linker protein family.

It localises to the cellular thylakoid membrane. Functionally, rod linker protein, associated with allophycocyanin. Linker polypeptides determine the state of aggregation and the location of the disk-shaped phycobiliprotein units within the phycobilisome and modulate their spectroscopic properties in order to mediate a directed and optimal energy transfer. This is Phycobilisome 7.8 kDa linker polypeptide, allophycocyanin-associated, core (apcC) from Thermosynechococcus vestitus (strain NIES-2133 / IAM M-273 / BP-1).